Reading from the N-terminus, the 696-residue chain is Gametogenetin-binding protein 2 (696 aa).

Ser-360 is subject to Phosphoserine.

In terms of assembly, interacts with GGN.

The protein resides in the cytoplasmic vesicle. May be involved in spermatogenesis. This Rattus norvegicus (Rat) protein is Gametogenetin-binding protein 2 (Ggnbp2).